Reading from the N-terminus, the 557-residue chain is uncharacterized protein (557 aa).

Residues 7 to 206 (SSFIDMLRLG…FACFLEGMLS (200 aa)) enclose the DhaL domain.

This is an uncharacterized protein from Mycoplasma genitalium (strain ATCC 33530 / DSM 19775 / NCTC 10195 / G37) (Mycoplasmoides genitalium).